The following is a 473-amino-acid chain: T-box transcription factor TBX6L (473 aa).

The segment at residues 43–217 (LWDKFSSIGT…NNPFAKGFRD (175 aa)) is a DNA-binding region (T-box). Residues 342–361 (RLNPQETHHNSRPKIQLQPP) are disordered.

In terms of tissue distribution, exclusively expressed by ventral mesendoderm.

The protein resides in the nucleus. In terms of biological role, probable transcriptional regulator involved in developmental processes. The protein is T-box transcription factor TBX6L (tbx6l) of Danio rerio (Zebrafish).